The following is a 142-amino-acid chain: Prefoldin subunit alpha (142 aa).

The protein belongs to the prefoldin subunit alpha family. In terms of assembly, heterohexamer of two alpha and four beta subunits.

It is found in the cytoplasm. Its function is as follows. Molecular chaperone capable of stabilizing a range of proteins. Seems to fulfill an ATP-independent, HSP70-like function in archaeal de novo protein folding. The polypeptide is Prefoldin subunit alpha (Methanosarcina mazei (strain ATCC BAA-159 / DSM 3647 / Goe1 / Go1 / JCM 11833 / OCM 88) (Methanosarcina frisia)).